The following is a 113-amino-acid chain: MAKYQKLGRDSSARKALFRAVVTALFDKERIETTEAKAKAVQSIAEEMITLAKRGDLHARRQALAYIYDESVVTKLFNQIAPRYADRNGGYTRVIRTGVRKGDAAPMAILELV.

It belongs to the bacterial ribosomal protein bL17 family. As to quaternary structure, part of the 50S ribosomal subunit. Contacts protein L32.

This chain is Large ribosomal subunit protein bL17, found in Symbiobacterium thermophilum (strain DSM 24528 / JCM 14929 / IAM 14863 / T).